A 316-amino-acid chain; its full sequence is 4-hydroxy-3-methylbut-2-enyl diphosphate reductase (316 aa).

Residue Cys12 participates in [4Fe-4S] cluster binding. (2E)-4-hydroxy-3-methylbut-2-enyl diphosphate contacts are provided by His41 and His74. Dimethylallyl diphosphate is bound by residues His41 and His74. His41 and His74 together coordinate isopentenyl diphosphate. Residue Cys96 coordinates [4Fe-4S] cluster. His124 lines the (2E)-4-hydroxy-3-methylbut-2-enyl diphosphate pocket. His124 contacts dimethylallyl diphosphate. Residue His124 participates in isopentenyl diphosphate binding. Glu126 acts as the Proton donor in catalysis. Thr167 is a binding site for (2E)-4-hydroxy-3-methylbut-2-enyl diphosphate. Residue Cys197 participates in [4Fe-4S] cluster binding. (2E)-4-hydroxy-3-methylbut-2-enyl diphosphate-binding residues include Ser225, Ser226, Asn227, and Ser269. The dimethylallyl diphosphate site is built by Ser225, Ser226, Asn227, and Ser269. Residues Ser225, Ser226, Asn227, and Ser269 each coordinate isopentenyl diphosphate.

This sequence belongs to the IspH family. As to quaternary structure, homodimer. Requires [4Fe-4S] cluster as cofactor.

It catalyses the reaction isopentenyl diphosphate + 2 oxidized [2Fe-2S]-[ferredoxin] + H2O = (2E)-4-hydroxy-3-methylbut-2-enyl diphosphate + 2 reduced [2Fe-2S]-[ferredoxin] + 2 H(+). The catalysed reaction is dimethylallyl diphosphate + 2 oxidized [2Fe-2S]-[ferredoxin] + H2O = (2E)-4-hydroxy-3-methylbut-2-enyl diphosphate + 2 reduced [2Fe-2S]-[ferredoxin] + 2 H(+). Its pathway is isoprenoid biosynthesis; dimethylallyl diphosphate biosynthesis; dimethylallyl diphosphate from (2E)-4-hydroxy-3-methylbutenyl diphosphate: step 1/1. It functions in the pathway isoprenoid biosynthesis; isopentenyl diphosphate biosynthesis via DXP pathway; isopentenyl diphosphate from 1-deoxy-D-xylulose 5-phosphate: step 6/6. Catalyzes the conversion of 1-hydroxy-2-methyl-2-(E)-butenyl 4-diphosphate (HMBPP) into a mixture of isopentenyl diphosphate (IPP) and dimethylallyl diphosphate (DMAPP). Acts in the terminal step of the DOXP/MEP pathway for isoprenoid precursor biosynthesis. In Enterobacter sp. (strain 638), this protein is 4-hydroxy-3-methylbut-2-enyl diphosphate reductase.